The sequence spans 469 residues: Tubulin gamma-2 chain (469 aa).

Residue 142 to 148 participates in GTP binding; it reads AGGTGSG.

This sequence belongs to the tubulin family.

The protein resides in the cytoplasm. The protein localises to the cytoskeleton. It localises to the microtubule organizing center. Functionally, tubulin is the major constituent of microtubules. The gamma chain is found at microtubule organizing centers (MTOC) such as the spindle poles, suggesting that it is involved in the minus-end nucleation of microtubule assembly. This Oryza sativa subsp. japonica (Rice) protein is Tubulin gamma-2 chain (TUBG2).